The following is a 491-amino-acid chain: Eupatolide synthase (491 aa).

The chain crosses the membrane as a helical; Signal-anchor for type II membrane protein span at residues 7-27 (LPSWLLPAVVILTISCILMLW). C430 contacts heme.

Belongs to the cytochrome P450 family. It depends on heme as a cofactor. In terms of tissue distribution, expressed in leaf primordia.

Its subcellular location is the membrane. The catalysed reaction is 8beta-hydroxygermacra-1(10),4,11(13)-trien-12-oate + reduced [NADPH--hemoprotein reductase] + O2 = eupatolide + oxidized [NADPH--hemoprotein reductase] + 2 H2O. It functions in the pathway secondary metabolite biosynthesis; terpenoid biosynthesis. Its function is as follows. Involved in the biosynthesis of germacrene-derived sesquiterpene lactones. Hydroxylates 8-beta-hydroxy-germacrene A acid to 6-alpha,8-beta-hydroxy-germacrene A acid, which, in turn, undergo spontaneous lactonization to become eupatolide. The chain is Eupatolide synthase from Helianthus annuus (Common sunflower).